The chain runs to 511 residues: ESX-1 secretion system protein EccD1 (511 aa).

Serine 2 is modified (N-acetylserine). At serine 2–arginine 143 the chain is on the cytoplasmic side. A helical membrane pass occupies residues phenylalanine 144–tryptophan 164. Residues tryptophan 165–serine 170 are Periplasmic-facing. Residues leucine 171 to alanine 191 traverse the membrane as a helical segment. The Cytoplasmic portion of the chain corresponds to asparagine 192–glutamate 202. The helical transmembrane segment at cysteine 203–proline 223 threads the bilayer. The Periplasmic segment spans residues arginine 224 to asparagine 227. The chain crosses the membrane as a helical span at residues serine 228–threonine 248. Over arginine 249–glutamate 257 the chain is Cytoplasmic. The chain crosses the membrane as a helical span at residues leucine 258 to tyrosine 278. Over glycine 279–proline 285 the chain is Periplasmic. The chain crosses the membrane as a helical span at residues alanine 286 to valine 306. At alanine 307 to leucine 367 the chain is on the cytoplasmic side. 2 consecutive transmembrane segments (helical) span residues leucine 368–valine 388 and arginine 389–phenylalanine 409. The Cytoplasmic portion of the chain corresponds to arginine 410–alanine 420. The helical transmembrane segment at tryptophan 421–tryptophan 441 threads the bilayer. Over tyrosine 442–histidine 444 the chain is Periplasmic. Residues tyrosine 445 to glycine 465 form a helical membrane-spanning segment. At serine 466–glutamate 482 the chain is on the cytoplasmic side. A helical transmembrane segment spans residues leucine 483–tyrosine 503. Residues aspartate 504–phenylalanine 511 lie on the Periplasmic side of the membrane.

The protein belongs to the EccD/Snm4 family. Possibly a homodimer. Part of the ESX-1 / type VII secretion system (T7SS), which is composed of cytosolic and membrane components. The ESX-1 membrane complex is composed of EccB1, EccCa1, EccCb1, EccD1 and EccE1.

It is found in the cell inner membrane. Functionally, part of the ESX-1 specialized secretion system, which delivers several virulence factors to host cells during infection, including the key virulence factors EsxA (ESAT-6) and EsxB (CFP-10). The sequence is that of ESX-1 secretion system protein EccD1 from Mycobacterium tuberculosis (strain ATCC 25618 / H37Rv).